A 122-amino-acid chain; its full sequence is NADH-ubiquinone oxidoreductase chain 3 (122 aa).

The next 3 helical transmembrane spans lie at 12-32 (VLIF…LSYV), 66-86 (LVAI…PWAV), and 91-111 (VTIF…VGFI).

This sequence belongs to the complex I subunit 3 family.

The protein resides in the mitochondrion membrane. The enzyme catalyses a ubiquinone + NADH + 5 H(+)(in) = a ubiquinol + NAD(+) + 4 H(+)(out). In terms of biological role, core subunit of the mitochondrial membrane respiratory chain NADH dehydrogenase (Complex I) that is believed to belong to the minimal assembly required for catalysis. Complex I functions in the transfer of electrons from NADH to the respiratory chain. The immediate electron acceptor for the enzyme is believed to be ubiquinone. The sequence is that of NADH-ubiquinone oxidoreductase chain 3 (NAD3) from Reclinomonas americana.